Here is a 129-residue protein sequence, read N- to C-terminus: Large ribosomal subunit protein bL21 (129 aa).

Belongs to the bacterial ribosomal protein bL21 family. In terms of assembly, part of the 50S ribosomal subunit. Contacts protein L20.

Its function is as follows. This protein binds to 23S rRNA in the presence of protein L20. In Prochlorococcus marinus (strain MIT 9313), this protein is Large ribosomal subunit protein bL21.